Reading from the N-terminus, the 498-residue chain is MEKYILSIDQGTTSSRAIIFDHDGNVVSVAQQEFLQYYPKPGWVEHDPNEIWATTMGVIADAMARGNIKRSQISAIGITNQRETTVIWDAETGKPVHNAIVWQDRRTSKICDNLKEKGLEETIKHKTGLMVDAYFSGTKIKWILDNVEGAREKAEAGKLRFGTIDTWLIWKLTNGKVHVTDYTNASRTMIYNIFDLKWDEDLLKELNIPSSLLPEVKPSSQIYGNTDADVFGAEVPIAGIAGDQQAATFGQVCYEKGMAKNTYGTGCFMLMNTGEDPIESKHGLLTTIAYGINGKVNYALEGSIFVTGAAVQWLRDELKIVDSAADTEYYATKVKDNGGVYVVPAFVGLGAPYWDMYARGTIVGLTRGSSKAHIVRATLESIAYQTRDVLEAMEADSGIKLKTLRVDGGAALNNFLMQFQSDILGVEVERPVVNETTALGAAYLAGLAVGYWNGQEELLRKWKRDALFTPKMAEDERERLYAGWKRAVERARNWIEEK.

Thr12 provides a ligand contact to ADP. Thr12, Thr13, and Ser14 together coordinate ATP. Thr12 provides a ligand contact to sn-glycerol 3-phosphate. ADP is bound at residue Arg16. Sn-glycerol 3-phosphate is bound by residues Arg82, Glu83, Tyr134, and Asp243. Arg82, Glu83, Tyr134, Asp243, and Gln244 together coordinate glycerol. Positions 265 and 308 each coordinate ADP. ATP contacts are provided by Thr265, Gly308, Gln312, and Gly409. ADP-binding residues include Gly409 and Asn413.

This sequence belongs to the FGGY kinase family.

It catalyses the reaction glycerol + ATP = sn-glycerol 3-phosphate + ADP + H(+). Its pathway is polyol metabolism; glycerol degradation via glycerol kinase pathway; sn-glycerol 3-phosphate from glycerol: step 1/1. Inhibited by fructose 1,6-bisphosphate (FBP). In terms of biological role, key enzyme in the regulation of glycerol uptake and metabolism. Catalyzes the phosphorylation of glycerol to yield sn-glycerol 3-phosphate. The sequence is that of Glycerol kinase from Petrotoga mobilis (strain DSM 10674 / SJ95).